Consider the following 106-residue polypeptide: UPF0213 protein VPA1222 (106 aa).

The region spanning 7 to 82 is the GIY-YIG domain; sequence QHWSVYLIRN…KQLTKSKKEQ (76 aa).

Belongs to the UPF0213 family.

The protein is UPF0213 protein VPA1222 of Vibrio parahaemolyticus serotype O3:K6 (strain RIMD 2210633).